Reading from the N-terminus, the 246-residue chain is 23S rRNA (guanosine-2'-O-)-methyltransferase RlmB (246 aa).

S-adenosyl-L-methionine contacts are provided by Gly-196, Ile-216, and Leu-225.

Belongs to the class IV-like SAM-binding methyltransferase superfamily. RNA methyltransferase TrmH family. RlmB subfamily. As to quaternary structure, homodimer.

Its subcellular location is the cytoplasm. The catalysed reaction is guanosine(2251) in 23S rRNA + S-adenosyl-L-methionine = 2'-O-methylguanosine(2251) in 23S rRNA + S-adenosyl-L-homocysteine + H(+). In terms of biological role, specifically methylates the ribose of guanosine 2251 in 23S rRNA. The protein is 23S rRNA (guanosine-2'-O-)-methyltransferase RlmB of Yersinia pestis.